We begin with the raw amino-acid sequence, 134 residues long: Protein PsiE homolog (134 aa).

4 helical membrane-spanning segments follow: residues 14 to 34 (LQWILNIALIILSIVLSIFLI), 56 to 76 (VESIIVYFLYFEFIALIIKYF), 82 to 102 (FPLRYFIYIGITALIRLIIVS), and 106 to 126 (PMETLLYAGAILVLVIALYIS).

Belongs to the PsiE family.

The protein resides in the cell membrane. This chain is Protein PsiE homolog, found in Bacillus anthracis.